Reading from the N-terminus, the 340-residue chain is Nesprin-4 (340 aa).

Disordered regions lie at residues 1-86 (MAQF…DGGK) and 254-277 (HRRR…DAML). The Cytoplasmic portion of the chain corresponds to 1–291 (MAQFPLLGHG…GVPAPASRRP (291 aa)). The span at 53 to 63 (APEHFMDEPKS) shows a compositional bias: basic and acidic residues. Residues 283–340 (VPAPASRRPLTFLLLLLFLLLVGATLLLPLSGVPCCSHTRLARTPYLVLSYVNGLPPI) form the KASH domain. The helical; Anchor for type IV membrane protein transmembrane segment at 292-312 (LTFLLLLLFLLLVGATLLLPL) threads the bilayer. Residues 313–340 (SGVPCCSHTRLARTPYLVLSYVNGLPPI) lie on the Perinuclear space side of the membrane.

The protein belongs to the nesprin family. As to quaternary structure, core component of LINC complexes which are composed of inner nuclear membrane SUN domain-containing proteins coupled to outer nuclear membrane KASH domain-containing nesprins. SUN and KASH domain-containing proteins seem to bind each other promiscuously; however, differentially expression of LINC complex constituents can give rise to specific assemblies. Probably part of a SUN1-containing LINC complex. Interacts with kinesins KIF5B and KLC1.

Its subcellular location is the nucleus outer membrane. In terms of biological role, as a component of the LINC (LInker of Nucleoskeleton and Cytoskeleton) complex, involved in the connection between the nuclear lamina and the cytoskeleton. The nucleocytoplasmic interactions established by the LINC complex play an important role in the transmission of mechanical forces across the nuclear envelope and in nuclear movement and positioning. Behaves as a kinesin cargo, providing a functional binding site for kinesin-1 at the nuclear envelope. Hence may contribute to the establishment of secretory epithelial morphology, by promoting kinesin-dependent apical migration of the centrosome and Golgi apparatus and basal localization of the nucleus. This Rattus norvegicus (Rat) protein is Nesprin-4 (Syne4).